A 524-amino-acid polypeptide reads, in one-letter code: GMP synthase [glutamine-hydrolyzing] (524 aa).

Positions 9–207 constitute a Glutamine amidotransferase type-1 domain; the sequence is RILILDFGSQ…VIHICQCIPN (199 aa). The Nucleophile role is filled by C86. Residues H181 and E183 contribute to the active site. In terms of domain architecture, GMPS ATP-PPase spans 208–399; sequence WTTKHIIEDS…LGLPADLIYR (192 aa). Position 235–241 (235–241) interacts with ATP; that stretch reads SGGVDSA.

In terms of assembly, homodimer.

It catalyses the reaction XMP + L-glutamine + ATP + H2O = GMP + L-glutamate + AMP + diphosphate + 2 H(+). The protein operates within purine metabolism; GMP biosynthesis; GMP from XMP (L-Gln route): step 1/1. Its function is as follows. Catalyzes the synthesis of GMP from XMP. The protein is GMP synthase [glutamine-hydrolyzing] of Coxiella burnetii (strain RSA 331 / Henzerling II).